Reading from the N-terminus, the 383-residue chain is Sphingosine kinase 1 (383 aa).

The region spanning 12–159 (PRPCRVLVLL…MNLLSLHTAS (148 aa)) is the DAGKc domain. ATP is bound by residues 22-24 (NPR) and 54-58 (TERQN). A substrate-binding site is contributed by 79–82 (SGDG). Asp81 (proton donor/acceptor) is an active-site residue. Residues Glu86 and 111 to 113 (GSG) each bind ATP. 2 consecutive short sequence motifs (nuclear export signal) follow at residues 147–155 (LSPMNLLSL) and 161–169 (RQLYSVLSL). A substrate-binding site is contributed by Asp178. 2 residues coordinate ATP: Arg185 and Arg191. Thr193 is modified (phosphothreonine). Ser225 carries the phosphoserine modification. 340 to 342 (DGE) contacts ATP. Residues 363–383 (GSSDSPSGRDSQRRPPPEEPI) form a disordered region. Over residues 372–383 (DSQRRPPPEEPI) the composition is skewed to basic and acidic residues.

In terms of assembly, interacts with ACY1. Binds to calmodulin. Interacts with SPHKAP. Interacts with CIB1, the interaction occurs in a calcium-dependent manner. Interacts with TRAF2. Interacts with EEF1A1; the interaction enhances SPHK1 kinase activity. Requires Mg(2+) as cofactor. In terms of tissue distribution, expressed in microglia (at protein level).

It localises to the cytoplasm. Its subcellular location is the nucleus. It is found in the cell membrane. The protein localises to the endosome membrane. The protein resides in the membrane. It localises to the clathrin-coated pit. Its subcellular location is the synapse. It carries out the reaction a sphingoid base + ATP = a sphingoid 1-phosphate + ADP + H(+). It catalyses the reaction L-seryl-[protein] + acetyl-CoA = O-acetyl-L-seryl-[protein] + CoA. The enzyme catalyses sphinganine + ATP = sphinganine 1-phosphate + ADP + H(+). The catalysed reaction is sphing-4-enine + ATP = sphing-4-enine 1-phosphate + ADP + H(+). It carries out the reaction 1-O-hexadecyl-2-amino-sn-glycerol + ATP = 1-O-hexadecyl-2-desoxy-2-amino-sn-glycero-3-phosphate + ADP + H(+). With respect to regulation, acetyltransferase activity increases in presence of the kinase substrate, sphingosine. In Purkinje cells, kinase activity on sphingosine increases in presence of VEGFA. In neurons, kinase activity increases during the first 24h in presence of Amyloid-beta protein 42 to decrease after 96h. In terms of biological role, catalyzes the phosphorylation of sphingosine to form sphingosine 1-phosphate (SPP), a lipid mediator with both intra- and extracellular functions. Also acts on D-erythro-sphingosine and to a lesser extent sphinganine, but not other lipids, such as D,L-threo-dihydrosphingosine, N,N-dimethylsphingosine, diacylglycerol, ceramide, or phosphatidylinositol. In contrast to proapoptotic SPHK2, has a negative effect on intracellular ceramide levels, enhances cell growth and inhibits apoptosis. Involved in the regulation of inflammatory response and neuroinflammation. Via the product sphingosine 1-phosphate, stimulates TRAF2 E3 ubiquitin ligase activity, and promotes activation of NF-kappa-B in response to TNF signaling leading to IL17 secretion. In response to TNF and in parallel to NF-kappa-B activation, negatively regulates RANTES induction through p38 MAPK signaling pathway. Involved in endocytic membrane trafficking induced by sphingosine, recruited to dilate endosomes, also plays a role on later stages of endosomal maturation and membrane fusion independently of its kinase activity. In Purkinje cells, seems to be also involved in the regulation of autophagosome-lysosome fusion upon VEGFA. Has serine acetyltransferase activity on PTGS2/COX2 in an acetyl-CoA dependent manner. The acetyltransferase activity increases in presence of the kinase substrate, sphingosine. During neuroinflammation, through PTGS2 acetylation, promotes neuronal secretion of specialized preresolving mediators (SPMs), especially 15-R-lipoxin A4, which results in an increase of phagocytic microglia. The polypeptide is Sphingosine kinase 1 (Sphk1) (Rattus norvegicus (Rat)).